The sequence spans 336 residues: UDP-3-O-acylglucosamine N-acyltransferase (336 aa).

The active-site Proton acceptor is the His233.

The protein belongs to the transferase hexapeptide repeat family. LpxD subfamily. Homotrimer.

The enzyme catalyses a UDP-3-O-[(3R)-3-hydroxyacyl]-alpha-D-glucosamine + a (3R)-hydroxyacyl-[ACP] = a UDP-2-N,3-O-bis[(3R)-3-hydroxyacyl]-alpha-D-glucosamine + holo-[ACP] + H(+). The protein operates within bacterial outer membrane biogenesis; LPS lipid A biosynthesis. Functionally, catalyzes the N-acylation of UDP-3-O-acylglucosamine using 3-hydroxyacyl-ACP as the acyl donor. Is involved in the biosynthesis of lipid A, a phosphorylated glycolipid that anchors the lipopolysaccharide to the outer membrane of the cell. The polypeptide is UDP-3-O-acylglucosamine N-acyltransferase (Helicobacter pylori (strain ATCC 700392 / 26695) (Campylobacter pylori)).